A 291-amino-acid polypeptide reads, in one-letter code: Acetyl-coenzyme A carboxylase carboxyl transferase subunit beta (291 aa).

The CoA carboxyltransferase N-terminal domain maps to 36–291 (MWVKCDGCGK…KILVIHGRGN (256 aa)). 4 residues coordinate Zn(2+): Cys40, Cys43, Cys59, and Cys62. The segment at 40–62 (CDGCGKVLYKNDMEKNNKVCYHC) adopts a C4-type zinc-finger fold.

It belongs to the AccD/PCCB family. Acetyl-CoA carboxylase is a heterohexamer composed of biotin carboxyl carrier protein (AccB), biotin carboxylase (AccC) and two subunits each of ACCase subunit alpha (AccA) and ACCase subunit beta (AccD). Zn(2+) is required as a cofactor.

The protein resides in the cytoplasm. It catalyses the reaction N(6)-carboxybiotinyl-L-lysyl-[protein] + acetyl-CoA = N(6)-biotinyl-L-lysyl-[protein] + malonyl-CoA. It participates in lipid metabolism; malonyl-CoA biosynthesis; malonyl-CoA from acetyl-CoA: step 1/1. Its function is as follows. Component of the acetyl coenzyme A carboxylase (ACC) complex. Biotin carboxylase (BC) catalyzes the carboxylation of biotin on its carrier protein (BCCP) and then the CO(2) group is transferred by the transcarboxylase to acetyl-CoA to form malonyl-CoA. The chain is Acetyl-coenzyme A carboxylase carboxyl transferase subunit beta from Clostridium kluyveri (strain NBRC 12016).